We begin with the raw amino-acid sequence, 75 residues long: Small ribosomal subunit protein bS18 (75 aa).

The protein belongs to the bacterial ribosomal protein bS18 family. Part of the 30S ribosomal subunit. Forms a tight heterodimer with protein bS6.

Its function is as follows. Binds as a heterodimer with protein bS6 to the central domain of the 16S rRNA, where it helps stabilize the platform of the 30S subunit. The sequence is that of Small ribosomal subunit protein bS18 from Ruegeria sp. (strain TM1040) (Silicibacter sp.).